A 135-amino-acid chain; its full sequence is Large ribosomal subunit protein uL16c (135 aa).

Belongs to the universal ribosomal protein uL16 family. In terms of assembly, part of the 50S ribosomal subunit.

Its subcellular location is the plastid. It localises to the chloroplast. In Olimarabidopsis pumila (Dwarf rocket), this protein is Large ribosomal subunit protein uL16c.